A 155-amino-acid polypeptide reads, in one-letter code: Small ribosomal subunit protein uS7c (155 aa).

It belongs to the universal ribosomal protein uS7 family. In terms of assembly, part of the 30S ribosomal subunit.

It is found in the plastid. The protein resides in the chloroplast. In terms of biological role, one of the primary rRNA binding proteins, it binds directly to 16S rRNA where it nucleates assembly of the head domain of the 30S subunit. In Spathiphyllum wallisii (Peace lily), this protein is Small ribosomal subunit protein uS7c (rps7).